Consider the following 142-residue polypeptide: Large ribosomal subunit protein uL11 (142 aa).

This sequence belongs to the universal ribosomal protein uL11 family. In terms of assembly, part of the ribosomal stalk of the 50S ribosomal subunit. Interacts with L10 and the large rRNA to form the base of the stalk. L10 forms an elongated spine to which L12 dimers bind in a sequential fashion forming a multimeric L10(L12)X complex. Post-translationally, one or more lysine residues are methylated.

In terms of biological role, forms part of the ribosomal stalk which helps the ribosome interact with GTP-bound translation factors. The polypeptide is Large ribosomal subunit protein uL11 (Afipia carboxidovorans (strain ATCC 49405 / DSM 1227 / KCTC 32145 / OM5) (Oligotropha carboxidovorans)).